The chain runs to 348 residues: D-erythrose-4-phosphate dehydrogenase (348 aa).

NAD(+)-binding positions include Arg12–Ile13 and Arg81. Residues Ser154–Thr156, Arg200, Thr213–Lys214, and Arg236 each bind substrate. Cys155 serves as the catalytic Nucleophile. NAD(+) is bound at residue Asn318.

Belongs to the glyceraldehyde-3-phosphate dehydrogenase family. Epd subfamily. Homotetramer.

It localises to the cytoplasm. The catalysed reaction is D-erythrose 4-phosphate + NAD(+) + H2O = 4-phospho-D-erythronate + NADH + 2 H(+). It functions in the pathway cofactor biosynthesis; pyridoxine 5'-phosphate biosynthesis; pyridoxine 5'-phosphate from D-erythrose 4-phosphate: step 1/5. In terms of biological role, catalyzes the NAD-dependent conversion of D-erythrose 4-phosphate to 4-phosphoerythronate. The protein is D-erythrose-4-phosphate dehydrogenase of Salmonella paratyphi A (strain ATCC 9150 / SARB42).